Reading from the N-terminus, the 303-residue chain is sn-1-specific diacylglycerol lipase ABHD11 (303 aa).

A mitochondrion-targeting transit peptide spans 1–22; that stretch reads MLRWTRAWTAPYRGIGLSNSSF. The AB hydrolase-1 domain maps to 55–290; the sequence is PALVFLHGLF…NAGHWVHSDR (236 aa). Lys75 is modified (N6-succinyllysine). Catalysis depends on charge relay system residues Ser129, Asp225, and His284.

The protein belongs to the AB hydrolase superfamily. Interacts with OGDH and DLST; this interaction maintains the functional lipoylation of the 2-oxoglutarate dehydrogenase complex. Phosphorylated.

The protein localises to the mitochondrion. It is found in the mitochondrion matrix. The catalysed reaction is a 1,3-diacyl-sn-glycerol + H2O = a 1-acyl-sn-glycerol + a fatty acid + H(+). It carries out the reaction 1-octadecanoyl-2-(9Z-octadecenoyl)-sn-glycerol + H2O = 2-(9Z-octadecenoyl)-glycerol + octadecanoate + H(+). The enzyme catalyses 1-octadecanoyl-2-(4Z,7Z,10Z,13Z,16Z,19Z-docosahexaenoyl)-sn-glycerol + H2O = 2-(4Z,7Z,10Z,13Z,16Z,19Z-docosahexaenoyl)-glycerol + octadecanoate + H(+). It catalyses the reaction a 1,2-diacyl-sn-glycerol + H2O = a 2-acylglycerol + a fatty acid + H(+). The catalysed reaction is 1,2-didecanoylglycerol + H2O = decanoylglycerol + decanoate + H(+). It carries out the reaction 1-octadecanoyl-2-(5Z,8Z,11Z,14Z-eicosatetraenoyl)-sn-glycerol + H2O = 2-(5Z,8Z,11Z,14Z-eicosatetraenoyl)-glycerol + octadecanoate + H(+). With respect to regulation, the diacylglycerol lipase activity can be modulated by phosphorylation by cAMP-dependent protein kinase. Functionally, catalyzes the hydrolysis of diacylglycerol in vitro and may function as a key regulator in lipid metabolism, namely by regulating the intracellular levels of diacylglycerol. 1,2-diacyl-sn-glycerols are the preferred substrate over 1,3-diacyl-sn-glycerols. The enzyme hydrolyzes stearate in preference to palmitate from the sn-1 position of 1,2-diacyl-sn-glycerols. Maintains the functional lipoylation of the 2-oxoglutarate dehydrogenase complex (OGDHc) through its interaction with the OGDHc by preventing the formation of lipoyl adducts. In addition, is also required for the expansion and differentiation of embryonic stem cells (ESCs). The sequence is that of sn-1-specific diacylglycerol lipase ABHD11 from Bos taurus (Bovine).